Reading from the N-terminus, the 398-residue chain is Acetate kinase (398 aa).

N10 contributes to the Mg(2+) binding site. An ATP-binding site is contributed by K17. R89 is a binding site for substrate. The Proton donor/acceptor role is filled by D148. ATP is bound by residues 208 to 212, 283 to 285, and 331 to 335; these read HLGNG, DCR, and GIGEN. Residue E385 coordinates Mg(2+).

This sequence belongs to the acetokinase family. As to quaternary structure, homodimer. Mg(2+) serves as cofactor. The cofactor is Mn(2+).

The protein localises to the cytoplasm. It catalyses the reaction acetate + ATP = acetyl phosphate + ADP. It functions in the pathway metabolic intermediate biosynthesis; acetyl-CoA biosynthesis; acetyl-CoA from acetate: step 1/2. Catalyzes the formation of acetyl phosphate from acetate and ATP. Can also catalyze the reverse reaction. This Histophilus somni (strain 129Pt) (Haemophilus somnus) protein is Acetate kinase.